The primary structure comprises 239 residues: Fumarate reductase iron-sulfur subunit (239 aa).

A 2Fe-2S ferredoxin-type domain is found at 5-95; sequence LTIRVFKYDP…DGVITLLPLP (91 aa). Positions 57, 62, 65, and 77 each coordinate [2Fe-2S] cluster. The 30-residue stretch at 142-171 folds into the 4Fe-4S ferredoxin-type domain; sequence AQEVFELDRCIECGCCIAACGTKIMREDFV. The [4Fe-4S] cluster site is built by Cys151, Cys154, and Cys157. 3 residues coordinate [3Fe-4S] cluster: Cys161, Cys208, and Cys214. [4Fe-4S] cluster is bound at residue Cys218.

Belongs to the succinate dehydrogenase/fumarate reductase iron-sulfur protein family. In terms of assembly, part of an enzyme complex containing three subunits: a flavoprotein (frdA), an iron-sulfur protein (frdB), and diheme cytochrome b (frdC). The cofactor is [2Fe-2S] cluster. [3Fe-4S] cluster serves as cofactor. It depends on [4Fe-4S] cluster as a cofactor.

The protein resides in the cell inner membrane. The enzyme catalyses a menaquinone + succinate = a menaquinol + fumarate. In terms of biological role, the fumarate reductase enzyme complex is required for fumarate respiration using formate or sulfide as electron donor. This chain is Fumarate reductase iron-sulfur subunit (frdB), found in Wolinella succinogenes (strain ATCC 29543 / DSM 1740 / CCUG 13145 / JCM 31913 / LMG 7466 / NCTC 11488 / FDC 602W) (Vibrio succinogenes).